The following is a 705-amino-acid chain: Elongation factor G (705 aa).

The region spanning 8–290 is the tr-type G domain; sequence EKYRNIGICA…GVVEYLPAPN (283 aa). Residues 17–24, 88–92, and 142–145 each bind GTP; these read AHVDAGKT, DTPGH, and NKMD.

Belongs to the TRAFAC class translation factor GTPase superfamily. Classic translation factor GTPase family. EF-G/EF-2 subfamily.

It localises to the cytoplasm. Catalyzes the GTP-dependent ribosomal translocation step during translation elongation. During this step, the ribosome changes from the pre-translocational (PRE) to the post-translocational (POST) state as the newly formed A-site-bound peptidyl-tRNA and P-site-bound deacylated tRNA move to the P and E sites, respectively. Catalyzes the coordinated movement of the two tRNA molecules, the mRNA and conformational changes in the ribosome. The sequence is that of Elongation factor G from Francisella philomiragia subsp. philomiragia (strain ATCC 25017 / CCUG 19701 / FSC 153 / O#319-036).